Consider the following 364-residue polypeptide: Protein-glutamate methylesterase/protein-glutamine glutaminase (364 aa).

The Response regulatory domain occupies 5-123 (RVLVVDDTIL…PAANKAALAN (119 aa)). Asp-56 bears the 4-aspartylphosphate mark. The CheB-type methylesterase domain maps to 174–364 (EIVVIGISTG…QEIVHTVKLY (191 aa)). Active-site residues include Ser-181, His-208, and Asp-306.

It belongs to the CheB family. Post-translationally, phosphorylated by CheA. Phosphorylation of the N-terminal regulatory domain activates the methylesterase activity.

The protein localises to the cytoplasm. It carries out the reaction [protein]-L-glutamate 5-O-methyl ester + H2O = L-glutamyl-[protein] + methanol + H(+). The catalysed reaction is L-glutaminyl-[protein] + H2O = L-glutamyl-[protein] + NH4(+). Involved in chemotaxis. Part of a chemotaxis signal transduction system that modulates chemotaxis in response to various stimuli. Catalyzes the demethylation of specific methylglutamate residues introduced into the chemoreceptors (methyl-accepting chemotaxis proteins or MCP) by CheR. Also mediates the irreversible deamidation of specific glutamine residues to glutamic acid. This chain is Protein-glutamate methylesterase/protein-glutamine glutaminase, found in Desulfotalea psychrophila (strain LSv54 / DSM 12343).